The chain runs to 546 residues: DDB1- and CUL4-associated factor 11 (546 aa).

The span at 1–19 shows a compositional bias: low complexity; the sequence is MGSRNSSSAGSGSGDPSEG. Positions 1-40 are disordered; that stretch reads MGSRNSSSAGSGSGDPSEGLPRRGAGLRRSEEEEEEDEDV. Leu-49 and Ser-75 each carry phosphoserine. WD repeat units follow at residues 170–210, 216–258, 263–302, 305–345, 353–392, 435–480, and 481–520; these read SYSQ…RKFK, DVGW…TALD, ERRFAVFSIAVSSDGREVLGGANDGCLYVFDREQNRRTLQ, SHED…EDDP, GHQDGITFIDSKGDARYLISNSKDQTIKLWDIRRFSSREG, GVLH…KKLT, and NHKACVRDVSWHPFEEKIVSSSWDGNLRLWQYRQAEYFQD. The disordered stretch occupies residues 523-546; it reads PESEECASAPAPVPQSSTPFSSPQ. The span at 536–546 shows a compositional bias: polar residues; the sequence is PQSSTPFSSPQ.

In terms of assembly, interacts with DDB1 and CUL4A.

It participates in protein modification; protein ubiquitination. In terms of biological role, may function as a substrate receptor for CUL4-DDB1 E3 ubiquitin-protein ligase complex. This chain is DDB1- and CUL4-associated factor 11 (DCAF11), found in Homo sapiens (Human).